The sequence spans 249 residues: Isoprenyl transferase (249 aa).

D25 is a catalytic residue. D25 serves as a coordination point for Mg(2+). Substrate is bound by residues 26–29 (GNGR), W30, R38, H42, and 70–72 (STE). The active-site Proton acceptor is the N73. Substrate is bound by residues W74, R76, R197, and 203–205 (RLS). Position 216 (E216) interacts with Mg(2+).

The protein belongs to the UPP synthase family. In terms of assembly, homodimer. The cofactor is Mg(2+).

Its function is as follows. Catalyzes the condensation of isopentenyl diphosphate (IPP) with allylic pyrophosphates generating different type of terpenoids. This Streptococcus pyogenes serotype M3 (strain ATCC BAA-595 / MGAS315) protein is Isoprenyl transferase.